Here is a 262-residue protein sequence, read N- to C-terminus: Phosphatidylglycerol--prolipoprotein diacylglyceryl transferase (262 aa).

The next 4 helical transmembrane spans lie at 17 to 37 (LAIH…YALG), 57 to 77 (LIFY…VLFY), 95 to 115 (GGMS…LFAH), and 119 to 139 (LGFF…LAAG). Arginine 140 is a binding site for a 1,2-diacyl-sn-glycero-3-phospho-(1'-sn-glycerol). 3 helical membrane passes run 173 to 193 (PSQL…LWWY), 200 to 220 (AGQV…LVEF), and 227 to 247 (FLGL…PMVL).

Belongs to the Lgt family.

The protein localises to the cell inner membrane. It catalyses the reaction L-cysteinyl-[prolipoprotein] + a 1,2-diacyl-sn-glycero-3-phospho-(1'-sn-glycerol) = an S-1,2-diacyl-sn-glyceryl-L-cysteinyl-[prolipoprotein] + sn-glycerol 1-phosphate + H(+). The protein operates within protein modification; lipoprotein biosynthesis (diacylglyceryl transfer). Functionally, catalyzes the transfer of the diacylglyceryl group from phosphatidylglycerol to the sulfhydryl group of the N-terminal cysteine of a prolipoprotein, the first step in the formation of mature lipoproteins. This Bordetella bronchiseptica (strain ATCC BAA-588 / NCTC 13252 / RB50) (Alcaligenes bronchisepticus) protein is Phosphatidylglycerol--prolipoprotein diacylglyceryl transferase.